Here is a 152-residue protein sequence, read N- to C-terminus: MALVSLKLQWADGADTSVPLPAYETSGAAGADIRANCPDGPVTLAPGARALVPTGLRMAIPQGYEVQIRPRSGLALRHGITLVNSPGTIDSDYRGAVGVIMQNLGDAAFEITHGMRIAQMVVAPVVQASFELSDSLSETDRGSGGFGSTGGD.

Substrate is bound by residues 71-73 (RSG), N84, and 88-90 (TID).

It belongs to the dUTPase family. Requires Mg(2+) as cofactor.

The catalysed reaction is dUTP + H2O = dUMP + diphosphate + H(+). Its pathway is pyrimidine metabolism; dUMP biosynthesis; dUMP from dCTP (dUTP route): step 2/2. This enzyme is involved in nucleotide metabolism: it produces dUMP, the immediate precursor of thymidine nucleotides and it decreases the intracellular concentration of dUTP so that uracil cannot be incorporated into DNA. This chain is Deoxyuridine 5'-triphosphate nucleotidohydrolase, found in Roseobacter denitrificans (strain ATCC 33942 / OCh 114) (Erythrobacter sp. (strain OCh 114)).